A 133-amino-acid chain; its full sequence is Histone H2A (133 aa).

The segment covering 1 to 10 has biased composition (gly residues); the sequence is MTGGKSGGKA. Positions 1–25 are disordered; sequence MTGGKSGGKASGSKSSQSRSSKAGL. 2 positions are modified to N6-acetyllysine: Lys-5 and Lys-9. A compositionally biased stretch (low complexity) spans 11–24; sequence SGSKSSQSRSSKAG. Gln-106 is subject to N5-methylglutamine. Ser-130 carries the phosphoserine modification. Residues 130–131 carry the [ST]-Q motif motif; it reads SQ.

Belongs to the histone H2A family. In terms of assembly, the nucleosome is a histone octamer containing two molecules each of H2A, H2B, H3 and H4 assembled in one H3-H4 heterotetramer and two H2A-H2B heterodimers. The octamer wraps approximately 147 bp of DNA. Phosphorylated to form H2AS128ph (gamma-H2A) in response to DNA double-strand breaks (DSBs) generated by exogenous genotoxic agents and by stalled replication forks. Phosphorylation is dependent on the DNA damage checkpoint kinases MEC1/ATR and TEL1/ATM, spreads on either side of a detected DSB site and may mark the surrounding chromatin for recruitment of proteins required for DNA damage signaling and repair. Gamma-H2A is removed from the DNA prior to the strand invasion-primer extension step of the repair process and subsequently dephosphorylated. Dephosphorylation is necessary for efficient recovery from the DNA damage checkpoint. Post-translationally, acetylated by ESA1 to form H2AK4ac and H2AK7ac.

It localises to the nucleus. The protein resides in the chromosome. Its function is as follows. Core component of nucleosome which plays a central role in DNA double strand break (DSB) repair. Nucleosomes wrap and compact DNA into chromatin, limiting DNA accessibility to the cellular machineries which require DNA as a template. Histones thereby play a central role in transcription regulation, DNA repair, DNA replication and chromosomal stability. DNA accessibility is regulated via a complex set of post-translational modifications of histones, also called histone code, and nucleosome remodeling. The chain is Histone H2A (HTA1) from Coccidioides immitis (strain RS) (Valley fever fungus).